We begin with the raw amino-acid sequence, 419 residues long: Dual specificity protein phosphatase 7 (419 aa).

The disordered stretch occupies residues 1-47 (MKNQLRGPPARAHMSTSGAAAAGGTRAGSEPGAGSGSGAGTGAGAAT). The span at 10 to 29 (ARAHMSTSGAAAAGGTRAGS) shows a compositional bias: low complexity. Positions 31-47 (PGAGSGSGAGTGAGAAT) are enriched in gly residues. Residues 68–187 (GGASLLLLDC…FQTEYSEHCE (120 aa)) form the Rhodanese domain. Positions 216 to 240 (CSDGESDRELPSSATESDGSPVPSS) are disordered. Residues 227 to 240 (SSATESDGSPVPSS) are compositionally biased toward polar residues. In terms of domain architecture, Tyrosine-protein phosphatase spans 244–387 (FPVQILPYLY…LLDFERTLGL (144 aa)). Cys331 serves as the catalytic Phosphocysteine intermediate. 331-337 (CLAGISR) is a binding site for substrate.

The protein belongs to the protein-tyrosine phosphatase family. Non-receptor class dual specificity subfamily. In terms of assembly, interacts with MAPK1/ERK2; the interaction enhances DUSP7 phosphatase activity. In terms of tissue distribution, strongly expressed in liver. Expressed at significantly higher levels in malignant hematopoietic cells than in corresponding non-malignant cells.

Its subcellular location is the cytoplasm. It carries out the reaction O-phospho-L-tyrosyl-[protein] + H2O = L-tyrosyl-[protein] + phosphate. It catalyses the reaction O-phospho-L-seryl-[protein] + H2O = L-seryl-[protein] + phosphate. The enzyme catalyses O-phospho-L-threonyl-[protein] + H2O = L-threonyl-[protein] + phosphate. With respect to regulation, strongly inhibited by sodium orthovanadate. Functionally, dual specificity protein phosphatase. Shows high activity towards MAPK1/ERK2. Also has lower activity towards MAPK14 and MAPK8. In arrested oocytes, plays a role in meiotic resumption. Promotes nuclear envelope breakdown and activation of the CDK1/Cyclin-B complex in oocytes, probably by dephosphorylating and inactivating the conventional protein kinase C (cPKC) isozyme PRKCB. May also inactivate PRKCA and/or PRKCG. Also important in oocytes for normal chromosome alignment on the metaphase plate and progression to anaphase, where it might regulate activity of the spindle-assembly checkpoint (SAC) complex. The protein is Dual specificity protein phosphatase 7 of Homo sapiens (Human).